We begin with the raw amino-acid sequence, 181 residues long: Ribonuclease HII (181 aa).

An RNase H type-2 domain is found at 1–181 (MICGIDEVGR…SLHRKSFRLI (181 aa)). D6, E7, and D98 together coordinate a divalent metal cation.

The protein belongs to the RNase HII family. Requires Mn(2+) as cofactor. It depends on Mg(2+) as a cofactor.

Its subcellular location is the cytoplasm. The catalysed reaction is Endonucleolytic cleavage to 5'-phosphomonoester.. Endonuclease that specifically degrades the RNA of RNA-DNA hybrids. The protein is Ribonuclease HII of Borrelia recurrentis (strain A1).